The sequence spans 87 residues: Large ribosomal subunit protein bL27 (87 aa).

This sequence belongs to the bacterial ribosomal protein bL27 family.

This chain is Large ribosomal subunit protein bL27, found in Paenarthrobacter aurescens (strain TC1).